The following is a 226-amino-acid chain: ATP-dependent dethiobiotin synthetase BioD (226 aa).

Mg(2+) is bound at residue threonine 19. Lysine 40 is a catalytic residue. The Mg(2+) site is built by aspartate 53 and glutamate 114. ATP-binding positions include aspartate 53, 114-117, and 174-175; these read EGAG and NR.

Belongs to the dethiobiotin synthetase family. As to quaternary structure, homodimer. Requires Mg(2+) as cofactor.

The protein resides in the cytoplasm. The enzyme catalyses (7R,8S)-7,8-diammoniononanoate + CO2 + ATP = (4R,5S)-dethiobiotin + ADP + phosphate + 3 H(+). The protein operates within cofactor biosynthesis; biotin biosynthesis; biotin from 7,8-diaminononanoate: step 1/2. Its function is as follows. Catalyzes a mechanistically unusual reaction, the ATP-dependent insertion of CO2 between the N7 and N8 nitrogen atoms of 7,8-diaminopelargonic acid (DAPA, also called 7,8-diammoniononanoate) to form a ureido ring. The sequence is that of ATP-dependent dethiobiotin synthetase BioD from Nitrosospira multiformis (strain ATCC 25196 / NCIMB 11849 / C 71).